The sequence spans 56 residues: Turripeptide XIV-01 (56 aa).

The first 21 residues, 1–21 (MRFHVLLTVALLLTSLMSIEA), serve as a signal peptide directing secretion. Residues 22-30 (KPVNGAEME) constitute a propeptide that is removed on maturation.

Post-translationally, contains 2 disulfide bonds. In terms of tissue distribution, expressed by the venom duct.

Its subcellular location is the secreted. The protein is Turripeptide XIV-01 of Gemmula speciosa (Splendid gem-turris).